We begin with the raw amino-acid sequence, 703 residues long: WD repeat-containing protein pop2 (703 aa).

3 stretches are compositionally biased toward polar residues: residues 1–27 (MSLS…SSSP), 63–73 (ESNSCNGNTSS), and 156–178 (SISS…TVSP). 2 disordered regions span residues 1 to 73 (MSLS…NTSS) and 156 to 180 (SISS…SPGS). Residues 1–170 (MSLSRCPTDN…SDNFPPSPKV (170 aa)) are interaction with pop1. The F-box domain occupies 236 to 283 (KDILSNLPFSIVQSILLNLDIHSFLSCRLVSPTWNRILDVHTSYWKHM). WD repeat units follow at residues 389–417 (GHKE…RVWN), 429–473 (GHIS…RVWK), 505–533 (GHTD…RIWR), 545–575 (GHSL…RVWD), 587–615 (GHDA…RIWD), and 625–654 (LPSN…KLWD).

Homodimer and heterodimer with pop1. Binds to cul1, pip1 and phosphorylated cdc18.

Its subcellular location is the cytoplasm. The protein resides in the nucleus. Functionally, involved in maintenance of ploidy through proteasome dependent degradation of CDK inhibitor rum1 and S-phase initiator cdc18. Functions as a recognition factor for rum1 and cdc18, which are subsequently ubiquitinated and targeted to the 26S proteasome for degradation. Together with pop1, required for cig2 instability during G2 and M phase and cig2 degradation in exponentially growing cells. In Schizosaccharomyces pombe (strain 972 / ATCC 24843) (Fission yeast), this protein is WD repeat-containing protein pop2 (pop2).